A 276-amino-acid chain; its full sequence is Probable transposase for insertion sequence element IS702 (276 aa).

One can recognise a DDE Tnp4 domain in the interval 118–256 (MDVTESPIER…SNQYRNRHRR (139 aa)). A divalent metal cation-binding residues include D119, D170, D190, and E234.

It belongs to the transposase 11 family. Requires a divalent metal cation as cofactor.

Functionally, involved in the transposition of the insertion sequence. The chain is Probable transposase for insertion sequence element IS702 from Microchaete diplosiphon (Fremyella diplosiphon).